The following is a 265-amino-acid chain: SPbeta prophage-derived uncharacterized protein YomU (265 aa).

The disordered stretch occupies residues 238–265; that stretch reads KADGTKGVVTSDEGTGSSQSSDLGGTTE. The segment covering 249–265 has biased composition (polar residues); the sequence is DEGTGSSQSSDLGGTTE.

The protein is SPbeta prophage-derived uncharacterized protein YomU (yomU) of Bacillus subtilis (strain 168).